Here is a 648-residue protein sequence, read N- to C-terminus: Threonine--tRNA ligase (648 aa).

Positions 1–63 constitute a TGS domain; sequence MSQISLTFPD…AASGRIAINT (63 aa). A catalytic region spans residues 247–544; that stretch reads DHRKLGREME…LIENYSGKLP (298 aa). The Zn(2+) site is built by Cys344, His395, and His521.

This sequence belongs to the class-II aminoacyl-tRNA synthetase family. Homodimer. Zn(2+) serves as cofactor.

The protein resides in the cytoplasm. The catalysed reaction is tRNA(Thr) + L-threonine + ATP = L-threonyl-tRNA(Thr) + AMP + diphosphate + H(+). In terms of biological role, catalyzes the attachment of threonine to tRNA(Thr) in a two-step reaction: L-threonine is first activated by ATP to form Thr-AMP and then transferred to the acceptor end of tRNA(Thr). Also edits incorrectly charged L-seryl-tRNA(Thr). The protein is Threonine--tRNA ligase of Paracoccus denitrificans (strain Pd 1222).